A 456-amino-acid polypeptide reads, in one-letter code: Chromosomal replication initiator protein DnaA (456 aa).

Positions 1–85 (MDADLNKLWE…EIKFIIESDL (85 aa)) are domain I, interacts with DnaA modulators. The domain II stretch occupies residues 85–117 (LNNEDELNNSDNSDKNRDKNSRRNIVVNDEMSS). The tract at residues 118–334 (TLNPKYTFNS…GALIRIIAYS (217 aa)) is domain III, AAA+ region. 4 residues coordinate ATP: Gly162, Gly164, Lys165, and Thr166. The segment at 335-456 (SLTNREVTVD…SDITKKVSQN (122 aa)) is domain IV, binds dsDNA.

Belongs to the DnaA family. In terms of assembly, oligomerizes as a right-handed, spiral filament on DNA at oriC.

The protein localises to the cytoplasm. Functionally, plays an essential role in the initiation and regulation of chromosomal replication. ATP-DnaA binds to the origin of replication (oriC) to initiate formation of the DNA replication initiation complex once per cell cycle. Binds the DnaA box (a 9 base pair repeat at the origin) and separates the double-stranded (ds)DNA. Forms a right-handed helical filament on oriC DNA; dsDNA binds to the exterior of the filament while single-stranded (ss)DNA is stabiized in the filament's interior. The ATP-DnaA-oriC complex binds and stabilizes one strand of the AT-rich DNA unwinding element (DUE), permitting loading of DNA polymerase. After initiation quickly degrades to an ADP-DnaA complex that is not apt for DNA replication. Binds acidic phospholipids. In Clostridium botulinum (strain Eklund 17B / Type B), this protein is Chromosomal replication initiator protein DnaA.